A 428-amino-acid polypeptide reads, in one-letter code: Enolase (428 aa).

A (2R)-2-phosphoglycerate-binding site is contributed by Gln-162. Catalysis depends on Glu-204, which acts as the Proton donor. Mg(2+) contacts are provided by Asp-241, Glu-282, and Asp-309. Residues Lys-334, Arg-363, Ser-364, and Lys-385 each coordinate (2R)-2-phosphoglycerate. Catalysis depends on Lys-334, which acts as the Proton acceptor.

It belongs to the enolase family. Mg(2+) serves as cofactor.

The protein localises to the cytoplasm. The protein resides in the secreted. Its subcellular location is the cell surface. It carries out the reaction (2R)-2-phosphoglycerate = phosphoenolpyruvate + H2O. It functions in the pathway carbohydrate degradation; glycolysis; pyruvate from D-glyceraldehyde 3-phosphate: step 4/5. Catalyzes the reversible conversion of 2-phosphoglycerate (2-PG) into phosphoenolpyruvate (PEP). It is essential for the degradation of carbohydrates via glycolysis. The chain is Enolase from Mycobacterium marinum (strain ATCC BAA-535 / M).